The following is a 275-amino-acid chain: Dermonecrotic toxin SpaSicTox-betaIIA1 (275 aa).

Histidine 5 is an active-site residue. Mg(2+)-binding residues include glutamate 25 and aspartate 27. The Nucleophile role is filled by histidine 41. Cystine bridges form between cysteine 45-cysteine 51 and cysteine 47-cysteine 190. Aspartate 85 serves as a coordination point for Mg(2+).

It belongs to the arthropod phospholipase D family. Class II subfamily. Requires Mg(2+) as cofactor. In terms of tissue distribution, expressed by the venom gland.

Its subcellular location is the secreted. It catalyses the reaction an N-(acyl)-sphingosylphosphocholine = an N-(acyl)-sphingosyl-1,3-cyclic phosphate + choline. The enzyme catalyses an N-(acyl)-sphingosylphosphoethanolamine = an N-(acyl)-sphingosyl-1,3-cyclic phosphate + ethanolamine. It carries out the reaction a 1-acyl-sn-glycero-3-phosphocholine = a 1-acyl-sn-glycero-2,3-cyclic phosphate + choline. The catalysed reaction is a 1-acyl-sn-glycero-3-phosphoethanolamine = a 1-acyl-sn-glycero-2,3-cyclic phosphate + ethanolamine. Functionally, dermonecrotic toxins cleave the phosphodiester linkage between the phosphate and headgroup of certain phospholipids (sphingolipid and lysolipid substrates), forming an alcohol (often choline) and a cyclic phosphate. This toxin acts on sphingomyelin (SM). It may also act on ceramide phosphoethanolamine (CPE), lysophosphatidylcholine (LPC) and lysophosphatidylethanolamine (LPE), but not on lysophosphatidylserine (LPS), and lysophosphatidylglycerol (LPG). It acts by transphosphatidylation, releasing exclusively cyclic phosphate products as second products. Induces dermonecrosis, hemolysis, increased vascular permeability, edema, inflammatory response, and platelet aggregation. The protein is Dermonecrotic toxin SpaSicTox-betaIIA1 of Sicarius patagonicus (Six-eyed sand spider).